The following is a 675-amino-acid chain: Methionine--tRNA ligase (675 aa).

Positions 15–25 (PYANGSIHLGH) match the 'HIGH' region motif. Positions 146, 149, 159, and 162 each coordinate Zn(2+). A 'KMSKS' region motif is present at residues 332-336 (KMSKS). Position 335 (K335) interacts with ATP. The tRNA-binding domain maps to 573 to 675 (DFAKVDMRIA…SGAQPGMQVK (103 aa)).

This sequence belongs to the class-I aminoacyl-tRNA synthetase family. MetG type 1 subfamily. Homodimer. Requires Zn(2+) as cofactor.

Its subcellular location is the cytoplasm. It carries out the reaction tRNA(Met) + L-methionine + ATP = L-methionyl-tRNA(Met) + AMP + diphosphate. Is required not only for elongation of protein synthesis but also for the initiation of all mRNA translation through initiator tRNA(fMet) aminoacylation. In Serratia proteamaculans (strain 568), this protein is Methionine--tRNA ligase.